The chain runs to 301 residues: Glycine--tRNA ligase alpha subunit (301 aa).

The protein belongs to the class-II aminoacyl-tRNA synthetase family. As to quaternary structure, tetramer of two alpha and two beta subunits.

It is found in the cytoplasm. The catalysed reaction is tRNA(Gly) + glycine + ATP = glycyl-tRNA(Gly) + AMP + diphosphate. The chain is Glycine--tRNA ligase alpha subunit from Shewanella baltica (strain OS223).